The sequence spans 159 residues: MADETDRHFDVQEKIRKYEEFLDQRLAKDLEAVFKSQDEIVAKITEYTQLKSSIEQIQKTDLKGKDLRSRVDLGCNFFCQASVPDPSRIFIAVGYGFFVEFTLSEALNFIEKKLAHLQHSVDKLGKDAAKIKAHMKLVLGGLQELQGLNQLSHRMHYPV.

This sequence belongs to the UXT family.

This Nematostella vectensis (Starlet sea anemone) protein is Protein UXT homolog.